The sequence spans 576 residues: Beta-bisabolene synthase (576 aa).

The (2E,6E)-farnesyl diphosphate site is built by Arg-286, Asp-323, Asp-327, Arg-466, and Asn-469. Mg(2+) contacts are provided by Asp-323 and Asp-327. The short motif at 323–327 is the DDXXD motif element; the sequence is DDVYD. Residues Asn-469, Thr-473, and Glu-477 each coordinate Mg(2+).

This sequence belongs to the terpene synthase family. Tpsb subfamily. It depends on Mg(2+) as a cofactor. Requires Mn(2+) as cofactor.

In terms of biological role, produces almost exclusively beta-bisabolene and only traces of alpha-bisabolol from (2E,6E)-farnesyl diphosphate in fragrance biosynthesis. The chain is Beta-bisabolene synthase from Santalum austrocaledonicum (Sandalwood).